We begin with the raw amino-acid sequence, 72 residues long: MKNSESIKEFKKLNSSQITEKIDQLRKDLFDLRFKQATRQLNETHKFKIIKKQVAQLLTLSKSQSTSQKPAD.

Belongs to the universal ribosomal protein uL29 family.

This chain is Large ribosomal subunit protein uL29, found in Prochlorococcus marinus subsp. pastoris (strain CCMP1986 / NIES-2087 / MED4).